The chain runs to 232 residues: Ribose-5-phosphate isomerase A (232 aa).

Residues 28 to 31, 83 to 86, and 96 to 99 each bind substrate; these read TGST, DGAD, and KGGG. Glutamate 105 serves as the catalytic Proton acceptor. Lysine 123 is a substrate binding site.

This sequence belongs to the ribose 5-phosphate isomerase family. In terms of assembly, homodimer.

The catalysed reaction is aldehydo-D-ribose 5-phosphate = D-ribulose 5-phosphate. The protein operates within carbohydrate degradation; pentose phosphate pathway; D-ribose 5-phosphate from D-ribulose 5-phosphate (non-oxidative stage): step 1/1. Functionally, catalyzes the reversible conversion of ribose-5-phosphate to ribulose 5-phosphate. This chain is Ribose-5-phosphate isomerase A, found in Rhodopseudomonas palustris (strain HaA2).